The following is a 175-amino-acid chain: uncharacterized protein (175 aa).

Disordered regions lie at residues 1–32 (MSHKDFNGLQAPQLLSSSSPVAKKQSSHKLRH) and 156–175 (KQKQAKRAANTRQRTYKYRQ). Residues 14 to 24 (LLSSSSPVAKK) are compositionally biased toward low complexity.

This is an uncharacterized protein from Mycoplasma pneumoniae (strain ATCC 29342 / M129 / Subtype 1) (Mycoplasmoides pneumoniae).